The following is a 621-amino-acid chain: Kelch-like protein 40 (621 aa).

A BTB domain is found at 33–98 (LDCVVRAGER…LYTSEIALDE (66 aa)). Residues 133-239 (CLAVFRLGLL…PRAFLESRVE (107 aa)) form the BACK domain. A disordered region spans residues 265 to 295 (ITTLRKKKKGKDGAGAKEADKGTSKAKAEED). Over residues 275 to 292 (KDGAGAKEADKGTSKAKA) the composition is skewed to basic and acidic residues. Kelch repeat units follow at residues 360-412 (QVFV…EALN), 413-462 (SIYV…SHMD), 463-510 (LVYV…VHDG), 512-557 (IIVA…SLVG), and 559-613 (LYAI…PVRL).

The protein belongs to the KLHL40 family. Component of the BCR(KLHL40) E3 ubiquitin ligase complex, at least composed of CUL3, KLHL40 and RBX1. Interacts with LMOD3. In terms of tissue distribution, highly expressed in fetal (19, 23 and 31 weeks of gestation) and adult skeletal muscle; expression levels tend to be higher in fetal compared to postnatal muscles (at protein level). Also expressed in fetal and adult heart.

Its subcellular location is the cytoplasm. It localises to the myofibril. The protein localises to the sarcomere. The protein resides in the a band. It is found in the i band. Functionally, substrate-specific adapter of a BCR (BTB-CUL3-RBX1) E3 ubiquitin ligase complex that acts as a key regulator of skeletal muscle development. The BCR(KLHL40) complex acts by mediating ubiquitination and degradation of TFDP1, thereby regulating the activity of the E2F:DP transcription factor complex. Promotes stabilization of LMOD3 by acting as a negative regulator of LMOD3 ubiquitination; the molecular process by which it negatively regulates ubiquitination of LMOD3 is however unclear. This chain is Kelch-like protein 40, found in Homo sapiens (Human).